Reading from the N-terminus, the 224-residue chain is MSSKSMVLGYWDIRGLAHAIRMLLEFTDTSYEEKRYICGEAPDYDRSQWLDVKFKLDLDFPNLPYLMDGKNKITQSNAILRYIARKHNMCGDTEEEKIRVDIMENQIMDFRMQLVRLCYNSNHENLKPQYLEQLPAQLKQFSLFLGKFTWFAGEKLTFVDFLTYDVLDQNRIFEPKCLDEFPNLKAFMCRFEALEKIAAFLQSDRFFKMPINNKMAKWGNKCLC.

The GST N-terminal domain occupies 4–91; that stretch reads KSMVLGYWDI…YIARKHNMCG (88 aa). Phosphoserine is present on serine 5. Residues 10-11, 49-53, 62-63, and 75-76 each bind glutathione; these read YW, WLDVK, NL, and QS. Residues 93–211 enclose the GST C-terminal domain; that stretch reads TEEEKIRVDI…QSDRFFKMPI (119 aa). A substrate-binding site is contributed by tyrosine 119.

Belongs to the GST superfamily. Mu family. Homodimer. Interacts with PFKM isoform 2 and isoform 3 (via N-terminal testis-specific region).

It localises to the cytoplasm. The catalysed reaction is RX + glutathione = an S-substituted glutathione + a halide anion + H(+). Conjugation of reduced glutathione to a wide number of exogenous and endogenous hydrophobic electrophiles. This chain is Glutathione S-transferase Mu 5 (Gstm5), found in Mus musculus (Mouse).